The following is a 485-amino-acid chain: Heat stress transcription factor A-1d (485 aa).

Disordered stretches follow at residues 1-34 and 126-149; these read MDVS…SSNA and RRKP…QNSS. Residues 35–129 mediate DNA binding; the sequence is PPPFLSKTYD…LLQSITRRKP (95 aa). Over residues 136–146 the composition is skewed to low complexity; it reads GHQRSQHSNGQ. Positions 152–218 are hydrophobic repeat HR-A/B; the sequence is ACVEVGKFGL…QLMSFLAKAV (67 aa). 2 disordered regions span residues 229-269 and 436-461; these read QQQN…GQIV and PVPD…DKTK. The Bipartite nuclear localization signal signature appears at 238–252; sequence NRRISDTSKKRRFKR. A compositionally biased stretch (polar residues) spans 441–455; that stretch reads MDSTPVDNETEQEQN. The short motif at 472 to 480 is the Nuclear export signal element; sequence LLSPETLDL.

It belongs to the HSF family. Class A subfamily. In terms of assembly, homotrimer. Interacts with HSP90-2. Post-translationally, exhibits temperature-dependent phosphorylation.

The protein resides in the cytoplasm. Its subcellular location is the nucleus. Transcriptional regulator that specifically binds DNA sequence 5'-AGAAnnTTCT-3' known as heat shock promoter elements (HSE). The polypeptide is Heat stress transcription factor A-1d (HSFA1D) (Arabidopsis thaliana (Mouse-ear cress)).